We begin with the raw amino-acid sequence, 161 residues long: Protein-export protein SecB (161 aa).

This sequence belongs to the SecB family. Homotetramer, a dimer of dimers. One homotetramer interacts with 1 SecA dimer.

The protein localises to the cytoplasm. Its function is as follows. One of the proteins required for the normal export of preproteins out of the cell cytoplasm. It is a molecular chaperone that binds to a subset of precursor proteins, maintaining them in a translocation-competent state. It also specifically binds to its receptor SecA. This chain is Protein-export protein SecB, found in Rhodopseudomonas palustris (strain BisA53).